Here is a 91-residue protein sequence, read N- to C-terminus: Large ribosomal subunit protein eL43 (91 aa).

The segment at 38–59 adopts a C4-type zinc-finger fold; it reads CNFCGKDSLKRKAAGIWECKAC.

Belongs to the eukaryotic ribosomal protein eL43 family.

The polypeptide is Large ribosomal subunit protein eL43 (Schistosoma mansoni (Blood fluke)).